The primary structure comprises 138 residues: Cysteine desulfuration protein SufE (138 aa).

Residue Cys51 is the Cysteine persulfide intermediate of the active site.

Belongs to the SufE family. In terms of assembly, homodimer. Interacts with SufS.

The protein resides in the cytoplasm. It participates in cofactor biosynthesis; iron-sulfur cluster biosynthesis. Its function is as follows. Participates in cysteine desulfuration mediated by SufS. Cysteine desulfuration mobilizes sulfur from L-cysteine to yield L-alanine and constitutes an essential step in sulfur metabolism for biosynthesis of a variety of sulfur-containing biomolecules. Functions as a sulfur acceptor for SufS, by mediating the direct transfer of the sulfur atom from the S-sulfanylcysteine of SufS, an intermediate product of cysteine desulfuration process. The sequence is that of Cysteine desulfuration protein SufE from Escherichia coli O81 (strain ED1a).